The primary structure comprises 166 residues: Phospholipase A2 inhibitor clone 02/03/06/07 (166 aa).

The first 19 residues, 1–19 (MRLILLSGLLLLGTFLANG), serve as a signal peptide directing secretion. In terms of domain architecture, C-type lectin spans 46 to 161 (LKHAFLTVHK…CDDNLLVVCE (116 aa)). 2 cysteine pairs are disulfide-bonded: Cys-83–Cys-160 and Cys-138–Cys-152. N-linked (GlcNAc...) asparagine glycosylation is present at Asn-122.

This sequence belongs to the alpha-type phospholipase A2 inhibitor family. In terms of assembly, homotrimer; non-covalently linked. As to expression, expressed by the liver.

It localises to the secreted. Its function is as follows. This phospholipase A2 inhibitor binds directly phospholipase A2 in the presence or absence of calcium. This chain is Phospholipase A2 inhibitor clone 02/03/06/07, found in Lachesis muta muta (Bushmaster).